We begin with the raw amino-acid sequence, 150 residues long: Ribonuclease pancreatic (150 aa).

The N-terminal stretch at 1-26 is a signal peptide; it reads MALKSLVLLSLLVLVLLLVRVQPSLG. N-linked (Glc) (glycation) lysine; in vitro glycans are attached at residues lysine 27 and lysine 33. 2 residues coordinate substrate: lysine 33 and arginine 36. Histidine 38 serves as the catalytic Proton acceptor. 4 disulfides stabilise this stretch: cysteine 52–cysteine 110, cysteine 66–cysteine 121, cysteine 84–cysteine 136, and cysteine 91–cysteine 98. Residue asparagine 60 is glycosylated (N-linked (GlcNAc...) asparagine; partial). N-linked (Glc) (glycation) lysine; in vitro glycosylation is found at lysine 63 and lysine 67. Substrate contacts are provided by residues 67–71, lysine 92, and arginine 111; that span reads KPVNT. Catalysis depends on histidine 145, which acts as the Proton donor.

The protein belongs to the pancreatic ribonuclease family. Interacts with and forms tight 1:1 complexes with RNH1. Dimerization of two such complexes may occur. Interaction with RNH1 inhibits this protein. Monomer. Pancreas.

The protein resides in the secreted. The enzyme catalyses an [RNA] containing cytidine + H2O = an [RNA]-3'-cytidine-3'-phosphate + a 5'-hydroxy-ribonucleotide-3'-[RNA].. It carries out the reaction an [RNA] containing uridine + H2O = an [RNA]-3'-uridine-3'-phosphate + a 5'-hydroxy-ribonucleotide-3'-[RNA].. Endonuclease that catalyzes the cleavage of RNA on the 3' side of pyrimidine nucleotides. Acts on single-stranded and double-stranded RNA. The polypeptide is Ribonuclease pancreatic (RNASE1) (Bos taurus (Bovine)).